The sequence spans 533 residues: Flavin-dependent halogenase armH4 (533 aa).

Positions 16, 19, and 49 each coordinate FAD. Residues Ser-337 and Gly-338 each coordinate chloride. Residue Val-339 participates in FAD binding.

It belongs to the flavin-dependent halogenase family.

It catalyses the reaction melleolide F + FADH2 + chloride + O2 = 6'-chloromelleolide F + FAD + 2 H2O + H(+). It carries out the reaction melleolide F + bromide + FADH2 + O2 = 6'-bromomelleolide F + FAD + 2 H2O. Its function is as follows. Flavin-dependent halogenase involved in the biosynthesis of melleolides, a range of antifungal and phytotoxic polyketide derivatives composed of an orsellinic acid (OA) moiety esterified to various sesquiterpene alcohols. The halogenase catalyzes the transfer of a single chlorine atom to the melleolide backbone, resulting in a 6'-chloromelleolide product. The enzyme acts on free substrate and does not depend on carrier-protein-dependent acceptor molecules. Can also catalyze the transfer of a single bromine atom to the melleolide backbone in vitro. In Armillaria mellea (Honey mushroom), this protein is Flavin-dependent halogenase armH4.